We begin with the raw amino-acid sequence, 383 residues long: S-adenosylmethionine synthase (383 aa).

His15 contacts ATP. Asp17 contributes to the Mg(2+) binding site. A K(+)-binding site is contributed by Glu43. The L-methionine site is built by Glu56 and Gln99. Positions Gln99–Arg109 are flexible loop. ATP contacts are provided by residues Asp164–Lys166, Arg230–Phe231, Asp239, Arg245–Lys246, Ala262, and Lys266. Asp239 serves as a coordination point for L-methionine. Lys270 provides a ligand contact to L-methionine.

It belongs to the AdoMet synthase family. Homotetramer; dimer of dimers. Mg(2+) serves as cofactor. K(+) is required as a cofactor.

It is found in the cytoplasm. The catalysed reaction is L-methionine + ATP + H2O = S-adenosyl-L-methionine + phosphate + diphosphate. Its pathway is amino-acid biosynthesis; S-adenosyl-L-methionine biosynthesis; S-adenosyl-L-methionine from L-methionine: step 1/1. In terms of biological role, catalyzes the formation of S-adenosylmethionine (AdoMet) from methionine and ATP. The overall synthetic reaction is composed of two sequential steps, AdoMet formation and the subsequent tripolyphosphate hydrolysis which occurs prior to release of AdoMet from the enzyme. The polypeptide is S-adenosylmethionine synthase (Pectobacterium atrosepticum (strain SCRI 1043 / ATCC BAA-672) (Erwinia carotovora subsp. atroseptica)).